The primary structure comprises 229 residues: Cytidylate kinase (229 aa).

12-20 contributes to the ATP binding site; it reads GPSGAGKGT.

Belongs to the cytidylate kinase family. Type 1 subfamily.

The protein localises to the cytoplasm. The catalysed reaction is CMP + ATP = CDP + ADP. It catalyses the reaction dCMP + ATP = dCDP + ADP. This chain is Cytidylate kinase, found in Pseudomonas paraeruginosa (strain DSM 24068 / PA7) (Pseudomonas aeruginosa (strain PA7)).